A 157-amino-acid polypeptide reads, in one-letter code: Crossover junction endodeoxyribonuclease RuvC (157 aa).

Catalysis depends on residues aspartate 9, glutamate 70, and aspartate 142. Residues aspartate 9, glutamate 70, and aspartate 142 each coordinate Mg(2+).

The protein belongs to the RuvC family. Homodimer which binds Holliday junction (HJ) DNA. The HJ becomes 2-fold symmetrical on binding to RuvC with unstacked arms; it has a different conformation from HJ DNA in complex with RuvA. In the full resolvosome a probable DNA-RuvA(4)-RuvB(12)-RuvC(2) complex forms which resolves the HJ. The cofactor is Mg(2+).

It localises to the cytoplasm. The catalysed reaction is Endonucleolytic cleavage at a junction such as a reciprocal single-stranded crossover between two homologous DNA duplexes (Holliday junction).. The RuvA-RuvB-RuvC complex processes Holliday junction (HJ) DNA during genetic recombination and DNA repair. Endonuclease that resolves HJ intermediates. Cleaves cruciform DNA by making single-stranded nicks across the HJ at symmetrical positions within the homologous arms, yielding a 5'-phosphate and a 3'-hydroxyl group; requires a central core of homology in the junction. The consensus cleavage sequence is 5'-(A/T)TT(C/G)-3'. Cleavage occurs on the 3'-side of the TT dinucleotide at the point of strand exchange. HJ branch migration catalyzed by RuvA-RuvB allows RuvC to scan DNA until it finds its consensus sequence, where it cleaves and resolves the cruciform DNA. This is Crossover junction endodeoxyribonuclease RuvC from Cyanothece sp. (strain PCC 7425 / ATCC 29141).